Here is a 326-residue protein sequence, read N- to C-terminus: N-acetyl-gamma-glutamyl-phosphate reductase (326 aa).

Cys155 is a catalytic residue.

Belongs to the NAGSA dehydrogenase family. Type 1 subfamily.

It localises to the cytoplasm. It carries out the reaction N-acetyl-L-glutamate 5-semialdehyde + phosphate + NADP(+) = N-acetyl-L-glutamyl 5-phosphate + NADPH + H(+). Its pathway is amino-acid biosynthesis; L-arginine biosynthesis; N(2)-acetyl-L-ornithine from L-glutamate: step 3/4. Functionally, catalyzes the NADPH-dependent reduction of N-acetyl-5-glutamyl phosphate to yield N-acetyl-L-glutamate 5-semialdehyde. This Shewanella denitrificans (strain OS217 / ATCC BAA-1090 / DSM 15013) protein is N-acetyl-gamma-glutamyl-phosphate reductase.